A 937-amino-acid chain; its full sequence is Chaperone protein ClpD2, chloroplastic (937 aa).

The N-terminal 80 residues, M1–K80, are a transit peptide targeting the chloroplast. 2 repeat regions span residues A81 to E137 and F152 to E217. A Clp R domain is found at A81–E217. Residues L259–E513 are i. ATP is bound by residues G304–T311 and G658–T665. The tract at residues V584 to S775 is II.

Belongs to the ClpA/ClpB family. ClpD subfamily. In terms of tissue distribution, highly expressed in stems, culms and leaves.

It localises to the plastid. The protein resides in the chloroplast. Its function is as follows. Molecular chaperone that may interact with a ClpP-like protease involved in degradation of denatured proteins in the chloroplast. This is Chaperone protein ClpD2, chloroplastic (CLPD2) from Oryza sativa subsp. japonica (Rice).